Consider the following 441-residue polypeptide: Ribosomal protein uS12 methylthiotransferase RimO (441 aa).

The MTTase N-terminal domain occupies 8 to 118 (PKIGFVSLGC…VLEHVHHYVP (111 aa)). [4Fe-4S] cluster contacts are provided by cysteine 17, cysteine 53, cysteine 82, cysteine 150, cysteine 154, and cysteine 157. The region spanning 136-373 (LTPRHYAYLK…MQLQQQISAE (238 aa)) is the Radical SAM core domain. Residues 376 to 441 (QEKVGREILV…DEYDLWGSRV (66 aa)) form the TRAM domain.

The protein belongs to the methylthiotransferase family. RimO subfamily. [4Fe-4S] cluster serves as cofactor.

It localises to the cytoplasm. The enzyme catalyses L-aspartate(89)-[ribosomal protein uS12]-hydrogen + (sulfur carrier)-SH + AH2 + 2 S-adenosyl-L-methionine = 3-methylsulfanyl-L-aspartate(89)-[ribosomal protein uS12]-hydrogen + (sulfur carrier)-H + 5'-deoxyadenosine + L-methionine + A + S-adenosyl-L-homocysteine + 2 H(+). Its function is as follows. Catalyzes the methylthiolation of an aspartic acid residue of ribosomal protein uS12. This is Ribosomal protein uS12 methylthiotransferase RimO from Escherichia coli (strain SMS-3-5 / SECEC).